We begin with the raw amino-acid sequence, 310 residues long: Bacteriochlorophyll synthase 34 kDa chain (310 aa).

Residues Met1–Pro13 are compositionally biased toward polar residues. Positions Met1–Lys20 are disordered. 8 consecutive transmembrane segments (helical) span residues Val39 to Gly59, Leu67 to Asp87, His112 to Gly132, Gln134 to Ile154, Leu166 to Leu186, Thr187 to Val207, Val248 to Leu268, and Val287 to Gly307.

It is found in the cell membrane. The protein operates within porphyrin-containing compound metabolism; bacteriochlorophyll biosynthesis (light-independent). Its function is as follows. Catalyzes the esterification of bacteriochlorophyllide a by geranylgeraniol-PPi. This is Bacteriochlorophyll synthase 34 kDa chain (bchG) from Chloroflexus aurantiacus (strain ATCC 29366 / DSM 635 / J-10-fl).